The sequence spans 300 residues: Porphobilinogen deaminase (300 aa).

C242 carries the S-(dipyrrolylmethanemethyl)cysteine modification.

It belongs to the HMBS family. As to quaternary structure, monomer. Dipyrromethane serves as cofactor.

It carries out the reaction 4 porphobilinogen + H2O = hydroxymethylbilane + 4 NH4(+). The protein operates within porphyrin-containing compound metabolism; protoporphyrin-IX biosynthesis; coproporphyrinogen-III from 5-aminolevulinate: step 2/4. Tetrapolymerization of the monopyrrole PBG into the hydroxymethylbilane pre-uroporphyrinogen in several discrete steps. In Blochmanniella pennsylvanica (strain BPEN), this protein is Porphobilinogen deaminase.